We begin with the raw amino-acid sequence, 387 residues long: O-methyltransferase lepI (387 aa).

Residue 135 to 148 (FENLWPVLMALPDF) participates in substrate binding. The segment at 175–195 (CFHWLATQPTRIANFKVLLTD) is substrate binding. Residues 227–228 (GG), Asp252, 275–276 (NF), and Arg291 contribute to the S-adenosyl-L-methionine site.

Belongs to the class I-like SAM-binding methyltransferase superfamily. Cation-independent O-methyltransferase family.

Functionally, O-methyltransferase; part of the gene cluster 23 that mediates the biosynthesis of a family of 2-pyridones known as leporins. The hybrid PKS-NRPS synthetase lepA and the enoyl reductase lepG are responsible for fusion of phenylalanine with a hexaketide and subsequent release of the stable tetramic acid precursor, pre-leporin C. Because lepA lacks a designated enoylreductase (ER) domain, the required activity is provided the enoyl reductase lepG. It is possible that the dehydrogenase lepF also participates in production of pre-leporin C. Cytochrome P450 monooxygenase lepH is then required for the ring expansion step to yield leporin C. Leporin C is then presumably further oxidized by the N-hydroxylase lepD to form leporin B. LepI may possess a function in biosynthesis upstream of lepA. Leporin B is further oxidized in the presence of ferric ion to give the leporin B trimer-iron chelate, but whether or not this reaction is catalyzed by an enzyme in the pathway or by ferric ion is not determined yet. The sequence is that of O-methyltransferase lepI from Aspergillus flavus (strain ATCC 200026 / FGSC A1120 / IAM 13836 / NRRL 3357 / JCM 12722 / SRRC 167).